A 437-amino-acid polypeptide reads, in one-letter code: Amino-acid acetyltransferase (437 aa).

In terms of domain architecture, N-acetyltransferase spans 289–437 (ECIRLATSFD…SKVLMLALDN (149 aa)).

This sequence belongs to the acetyltransferase family. ArgA subfamily.

The protein localises to the cytoplasm. It carries out the reaction L-glutamate + acetyl-CoA = N-acetyl-L-glutamate + CoA + H(+). It functions in the pathway amino-acid biosynthesis; L-arginine biosynthesis; N(2)-acetyl-L-ornithine from L-glutamate: step 1/4. The protein is Amino-acid acetyltransferase of Haemophilus ducreyi (strain 35000HP / ATCC 700724).